Here is a 529-residue protein sequence, read N- to C-terminus: Peptide chain release factor 3 (529 aa).

Positions 11–280 (AKRRTFAIIS…GLVEWAPAPM (270 aa)) constitute a tr-type G domain. GTP-binding positions include 20–27 (SHPDAGKT), 88–92 (DTPGH), and 142–145 (NKLD).

The protein belongs to the TRAFAC class translation factor GTPase superfamily. Classic translation factor GTPase family. PrfC subfamily.

It localises to the cytoplasm. Increases the formation of ribosomal termination complexes and stimulates activities of RF-1 and RF-2. It binds guanine nucleotides and has strong preference for UGA stop codons. It may interact directly with the ribosome. The stimulation of RF-1 and RF-2 is significantly reduced by GTP and GDP, but not by GMP. In Klebsiella pneumoniae (strain 342), this protein is Peptide chain release factor 3.